The primary structure comprises 1098 residues: Eukaryotic translation initiation factor 3 subunit A (1098 aa).

The 180-residue stretch at 324-503 (AQEQATRVLL…DCVRFGSSDA (180 aa)) folds into the PCI domain. Positions 574–844 (TEIERIHRRK…ARQAVIDSQR (271 aa)) form a coiled coil. 2 disordered regions span residues 599–648 (EKAA…KIKR) and 805–1098 (RAEK…NWRR). Composition is skewed to basic and acidic residues over residues 608 to 648 (QAKR…KIKR), 805 to 857 (RAEK…REME), and 877 to 895 (MPQR…EPFR). The span at 905 to 914 (DSSWRSSAQP) shows a compositional bias: polar residues. 2 stretches are compositionally biased toward basic and acidic residues: residues 916–978 (RKPD…ERGA) and 1054–1079 (LPPR…RDGP). Residues 1080–1098 (NRNSGANNAGNADSANWRR) are compositionally biased toward low complexity.

Belongs to the eIF-3 subunit A family. As to quaternary structure, component of the eukaryotic translation initiation factor 3 (eIF-3) complex.

It is found in the cytoplasm. Its function is as follows. RNA-binding component of the eukaryotic translation initiation factor 3 (eIF-3) complex, which is involved in protein synthesis of a specialized repertoire of mRNAs and, together with other initiation factors, stimulates binding of mRNA and methionyl-tRNAi to the 40S ribosome. The eIF-3 complex specifically targets and initiates translation of a subset of mRNAs involved in cell proliferation. This Caenorhabditis briggsae protein is Eukaryotic translation initiation factor 3 subunit A.